Consider the following 833-residue polypeptide: Leucine--tRNA ligase (833 aa).

Positions 41–52 (PYPSGAGLHVGH) match the 'HIGH' region motif. The 'KMSKS' region motif lies at 610–614 (KMSKS). An ATP-binding site is contributed by lysine 613.

The protein belongs to the class-I aminoacyl-tRNA synthetase family.

It localises to the cytoplasm. The catalysed reaction is tRNA(Leu) + L-leucine + ATP = L-leucyl-tRNA(Leu) + AMP + diphosphate. This is Leucine--tRNA ligase from Streptococcus pneumoniae (strain CGSP14).